A 533-amino-acid polypeptide reads, in one-letter code: Metal transporter nramp1 homolog (533 aa).

The segment at 1 to 33 (MTPRIESEESAPLVNKNNNNNNDNNNNNNVDEE) is disordered. At 1–68 (MTPRIESEES…PNIDKPDSKW (68 aa)) the chain is on the cytoplasmic side. A compositionally biased stretch (low complexity) spans 14 to 29 (VNKNNNNNNDNNNNNN). Residues 69-89 (INFKTLWAFTGPGFLMSIAYL) traverse the membrane as a helical segment. Residues 90 to 101 (DPGNLESDIQAG) are Extracellular-facing. A helical membrane pass occupies residues 102–122 (AMAGYQLLWVLFWSTVIGFWL). At 123-158 (QMLASRLGVVTGKHLAEHCREQYPKTPRLLLWLMTE) the chain is on the cytoplasmic side. The helical transmembrane segment at 159 to 179 (LAIIGSDIQEVIGTAIALQIL) threads the bilayer. Topologically, residues 180-182 (SNG) are extracellular. A helical transmembrane segment spans residues 183 to 203 (HIPLWAGVLFTAADTFTFLFL). The Cytoplasmic portion of the chain corresponds to 204-212 (EKYGIRKLE). Residues 213 to 233 (AFFCSLIAIMAISFGVEYIIS) traverse the membrane as a helical segment. The Extracellular portion of the chain corresponds to 234–256 (KPDQIEVVKGVFIPLCSQNNISQ). N253 carries an N-linked (GlcNAc...) asparagine glycan. Residues 257-277 (AVGILGAVVMPHNIYLHSALV) traverse the membrane as a helical segment. At 278-302 (QSREIDRKSETQVKIANKYNRLESA) the chain is on the cytoplasmic side. Residues 303–323 (FALIISFIINLLLVSVFAKGF) traverse the membrane as a helical segment. At 324–348 (YGETTEIGLSSAADFLMDKYGKVAK) the chain is on the extracellular side. The helical transmembrane segment at 349–368 (YIWAIGLFSAGQCSTMTGTY) threads the bilayer. Topologically, residues 369-387 (SGQFVMEGFLKLKIAPWKR) are cytoplasmic. Residues 388–408 (LLITRCTAIVPAMVVAILSTS) form a helical membrane-spanning segment. The Extracellular portion of the chain corresponds to 409–415 (HLDSLDQ). A helical membrane pass occupies residues 416–436 (WLNILQSIQLPFAVVPVLLFT). The Cytoplasmic segment spans residues 437 to 457 (SSEKIMGSKFKNHWLNNQFVR). A helical transmembrane segment spans residues 458-478 (FLSLLIIAINIYLIITFSMQI). The Extracellular portion of the chain corresponds to 479–481 (SES). Residues 482 to 502 (AWMISIVSISFFFYFIFIVYL) form a helical membrane-spanning segment. Topologically, residues 503 to 533 (SMGQENFNSMTKKIKNLFNNNSNQTYNNINY) are cytoplasmic.

This sequence belongs to the NRAMP family.

The protein localises to the membrane. Functionally, depletes iron from the phagolysosome in an ATP-dependent process. May rather act as a symporter of protons and metal cations in an ATP-dependent process. Nramp1 overexpression protected cells from L.pneumophila infection. The chain is Metal transporter nramp1 homolog (nramp1) from Dictyostelium discoideum (Social amoeba).